The chain runs to 516 residues: Glutamyl-tRNA(Gln) amidotransferase subunit B, mitochondrial (516 aa).

It belongs to the GatB/GatE family. GatB subfamily. Subunit of the heterotrimeric GatCAB amidotransferase (AdT) complex, composed of A, B and C subunits.

The protein resides in the mitochondrion. It carries out the reaction L-glutamyl-tRNA(Gln) + L-glutamine + ATP + H2O = L-glutaminyl-tRNA(Gln) + L-glutamate + ADP + phosphate + H(+). Functionally, allows the formation of correctly charged Gln-tRNA(Gln) through the transamidation of misacylated Glu-tRNA(Gln) in the mitochondria. The reaction takes place in the presence of glutamine and ATP through an activated gamma-phospho-Glu-tRNA(Gln). This chain is Glutamyl-tRNA(Gln) amidotransferase subunit B, mitochondrial, found in Drosophila melanogaster (Fruit fly).